We begin with the raw amino-acid sequence, 34 residues long: DDIT3 upstream open reading frame protein (34 aa).

In terms of assembly, interacts with DDIT3 (isoform 1).

It is found in the nucleus. The protein localises to the cytoplasm. Product of the upstream open reading frame (uORF) of DDIT3/CHOP that is specifically produced in absence of stress, thereby preventing translation of downstream stress effector DDIT3/CHOP. This Homo sapiens (Human) protein is DDIT3 upstream open reading frame protein.